The chain runs to 802 residues: MKFTLSWLKDHLETDEPLDRLAEKLTMIGLEVENIEDKAKALKPFTIARVISAEQHPNADRLRVCMVDTGDGGAPVQVVCGAPNARAGLVSVFSAPGTYIPGKDITLGVGTIRGVESRGMLCSAAELQISNDHDGIMELPADAPIGAAYAEWAALGDPVVEINLTPNRQDCTGVHGIARDLAAADMGKFKDPTIKPVKGEFPCPVKVTVEDATLCPGFALRLVRGVKNGPSPEWLQKRLTAIGLRPINALVDITNFMTYDRARPLHVFDARKVKGNLVVRRARDGETLLALDGRTYNLDPATCVIADEHGVESLAGIMGGEASGCDENTTDVLIESALWNEINIAQTGRKLGINSDARYRFERGVDPAFMVPGLELATKLVMEMCGGAPSENVVVGKAFGDDRVIDFPVTEVKRLSGIEVPQPEMKRILTHLGFMMAGPGPVVKVAVPSWRTDVHGKADIVEEIVRIYGVDKVPMTPFERGDDARKPVLTPLQLRTRRARRALASRGIIEAVTWSFITKSAAKLFGGGQRELEVANPIASDLSDMRPTLLAGLIAAAQANADRGFGDVALFEVGQVFKGDRPQDQFMAASGVRRGFASSEGLGRHWSGSVQADLFDAKADALAVLAAAGAPMQALQIVAGGPGWLHPGRSGTIQIGPQNVLGYFGEMHPRALEALGADGPLMVFEVILDRVPEAKKRPTRAKPLIELSAFQPVSRDFAFIVDRTVKAGDIVRAAQGVDKKLITGVNVFDVYEGKGIDDGKKSIAIAVTIQPREKTLTDQEIEAVAAKVVAEVTKKTGGTLRA.

Residues 39–150 form the tRNA-binding domain; that stretch reads AKALKPFTIA…ADAPIGAAYA (112 aa). A B5 domain is found at 400 to 475; the sequence is GDDRVIDFPV…RIYGVDKVPM (76 aa). Mg(2+)-binding residues include aspartate 453, aspartate 459, glutamate 462, and glutamate 463. The FDX-ACB domain maps to 708 to 801; that stretch reads SAFQPVSRDF…VTKKTGGTLR (94 aa).

It belongs to the phenylalanyl-tRNA synthetase beta subunit family. Type 1 subfamily. As to quaternary structure, tetramer of two alpha and two beta subunits. It depends on Mg(2+) as a cofactor.

The protein resides in the cytoplasm. It catalyses the reaction tRNA(Phe) + L-phenylalanine + ATP = L-phenylalanyl-tRNA(Phe) + AMP + diphosphate + H(+). The chain is Phenylalanine--tRNA ligase beta subunit from Bradyrhizobium diazoefficiens (strain JCM 10833 / BCRC 13528 / IAM 13628 / NBRC 14792 / USDA 110).